The following is a 324-amino-acid chain: Cytosolic sulfotransferase 13 (324 aa).

76–81 is a binding site for 3'-phosphoadenylyl sulfate; that stretch reads KSGTTW. His134 serves as the catalytic Proton acceptor. Residues Arg156, Ser164, Tyr222, and 288–290 each bind 3'-phosphoadenylyl sulfate; that span reads RKG.

Belongs to the sulfotransferase 1 family.

The protein localises to the cytoplasm. Sulfotransferase that utilizes 3'-phospho-5'-adenylyl sulfate (PAPS) as sulfonate donor. This is Cytosolic sulfotransferase 13 (SOT13) from Arabidopsis thaliana (Mouse-ear cress).